The chain runs to 306 residues: tRNA dimethylallyltransferase (306 aa).

11–18 (GPTAVGKS) contacts ATP. Residue 13–18 (TAVGKS) participates in substrate binding. Positions 35-38 (DSIQ) are interaction with substrate tRNA.

This sequence belongs to the IPP transferase family. In terms of assembly, monomer. Requires Mg(2+) as cofactor.

It catalyses the reaction adenosine(37) in tRNA + dimethylallyl diphosphate = N(6)-dimethylallyladenosine(37) in tRNA + diphosphate. In terms of biological role, catalyzes the transfer of a dimethylallyl group onto the adenine at position 37 in tRNAs that read codons beginning with uridine, leading to the formation of N6-(dimethylallyl)adenosine (i(6)A). The protein is tRNA dimethylallyltransferase of Borreliella burgdorferi (strain ZS7) (Borrelia burgdorferi).